The following is a 32-amino-acid chain: U13-ctenitoxin-Pn1a (32 aa).

3 cysteine pairs are disulfide-bonded: cysteine 3-cysteine 17, cysteine 10-cysteine 21, and cysteine 16-cysteine 30.

Expressed by the venom gland.

It localises to the secreted. In terms of biological role, acts as a neurotoxin. This chain is U13-ctenitoxin-Pn1a, found in Phoneutria nigriventer (Brazilian armed spider).